The following is a 533-amino-acid chain: 2-succinyl-5-enolpyruvyl-6-hydroxy-3-cyclohexene-1-carboxylate synthase (533 aa).

It belongs to the TPP enzyme family. MenD subfamily. Homodimer. It depends on Mg(2+) as a cofactor. Requires Mn(2+) as cofactor. Thiamine diphosphate is required as a cofactor.

The catalysed reaction is isochorismate + 2-oxoglutarate + H(+) = 5-enolpyruvoyl-6-hydroxy-2-succinyl-cyclohex-3-ene-1-carboxylate + CO2. The protein operates within quinol/quinone metabolism; 1,4-dihydroxy-2-naphthoate biosynthesis; 1,4-dihydroxy-2-naphthoate from chorismate: step 2/7. It functions in the pathway quinol/quinone metabolism; menaquinone biosynthesis. Its function is as follows. Catalyzes the thiamine diphosphate-dependent decarboxylation of 2-oxoglutarate and the subsequent addition of the resulting succinic semialdehyde-thiamine pyrophosphate anion to isochorismate to yield 2-succinyl-5-enolpyruvyl-6-hydroxy-3-cyclohexene-1-carboxylate (SEPHCHC). This chain is 2-succinyl-5-enolpyruvyl-6-hydroxy-3-cyclohexene-1-carboxylate synthase, found in Akkermansia muciniphila (strain ATCC BAA-835 / DSM 22959 / JCM 33894 / BCRC 81048 / CCUG 64013 / CIP 107961 / Muc).